A 435-amino-acid polypeptide reads, in one-letter code: MDNYTDVLYQYRLAPSASPEMEMELADPRQMVRGFHLPTNESQLEIPDYGNESLDYPNYQQMVGGPCRMEDNNISYWNLTCDSPLEYAMPLYGYCMPFLLIITIISNSLIVLVLSKKSMATPTNFVLMGMAICDMLTVIFPAPGLWYMYTFGNHYKPLHPVSMCLAYSIFNEIMPAMCHTISVWLTLALAVQRYIYVCHAPMARTWCTMPRVRRCTAYIALLAFLHQLPRFFDRTYMPLVIEWNGSPTEVCHLETSMWVHDYIGVDLYYTSYYLFRVLFVHLLPCIILVTLNILLFAAMRQAQERRKLLFRENRKKECKKLRETNCTTLMLIVVVSVFLLAEIPIAVVTAMHIVSSLIIEFLDYGLANICIMLTNFFLVFSYPINFGIYCGMSRQFRETFKEIFLGRLMAKKDSSTKYSIVNGARTCTNTNETVL.

Over methionine 1–glycine 93 the chain is Extracellular. A helical membrane pass occupies residues tyrosine 94 to leucine 114. Over serine 115 to asparagine 124 the chain is Cytoplasmic. Residues phenylalanine 125–leucine 145 traverse the membrane as a helical segment. At tryptophan 146–serine 168 the chain is on the extracellular side. The helical transmembrane segment at isoleucine 169–leucine 189 threads the bilayer. Topologically, residues alanine 190–arginine 211 are cytoplasmic. A helical transmembrane segment spans residues valine 212–proline 229. At arginine 230–arginine 276 the chain is on the extracellular side. A helical transmembrane segment spans residues valine 277–alanine 297. The Cytoplasmic portion of the chain corresponds to alanine 298 to threonine 327. A helical transmembrane segment spans residues threonine 328 to valine 348. The Extracellular portion of the chain corresponds to threonine 349–asparagine 368. Residues isoleucine 369–tyrosine 389 traverse the membrane as a helical segment. Topologically, residues cysteine 390–leucine 435 are cytoplasmic.

This sequence belongs to the G-protein coupled receptor 1 family. As to expression, in the female, expressed in the reproductive organs; strongly expressed in the spermathecae and the lower oviduct. No expression in the male reproductive organs. In the central nervous system of both sexes, it is expressed in the brain and ventral nerve cord (VNC); strongly expressed in the ventral regions of the suboesophageal ganglion, the cervical connective and in many nerve roots of the brain and VNC. Expressed in the s-LNvs and l-LNvs pdf neurons (at protein level).

The protein localises to the cell membrane. In terms of biological role, receptor for two functionally unrelated ligands; SP (A70A) for controlling reproductive behaviors and MIP for controlling sleep behavior. MIP-SPR pathway functions as a sleep homeostat which perceives the need for sleep and stabilizes it by providing a slow-acting inhibitory input to the fly arousal system that involve the pigment dispersing factor (pdf) neurons. SP-SPR is one of the multiple SP pathways that induce female post-mating behavioral responses (PMR) such as the suppression of mating receptivity and initiation of egg laying. The PMR switch is achieved by mediating the synaptic output of neurons such as those expressing fruitless (fru), double sex (dsx) and pickpocket (ppk). In Drosophila melanogaster (Fruit fly), this protein is Sex peptide receptor.